Here is a 365-residue protein sequence, read N- to C-terminus: Chorismate synthase (365 aa).

NADP(+)-binding residues include Arg-48 and Arg-54. FMN contacts are provided by residues 131-133 (RSS), 243-244 (NA), Gly-288, 303-307 (KPTSS), and Arg-329.

It belongs to the chorismate synthase family. As to quaternary structure, homotetramer. FMNH2 is required as a cofactor.

The catalysed reaction is 5-O-(1-carboxyvinyl)-3-phosphoshikimate = chorismate + phosphate. It participates in metabolic intermediate biosynthesis; chorismate biosynthesis; chorismate from D-erythrose 4-phosphate and phosphoenolpyruvate: step 7/7. Functionally, catalyzes the anti-1,4-elimination of the C-3 phosphate and the C-6 proR hydrogen from 5-enolpyruvylshikimate-3-phosphate (EPSP) to yield chorismate, which is the branch point compound that serves as the starting substrate for the three terminal pathways of aromatic amino acid biosynthesis. This reaction introduces a second double bond into the aromatic ring system. The polypeptide is Chorismate synthase (Rhizobium etli (strain ATCC 51251 / DSM 11541 / JCM 21823 / NBRC 15573 / CFN 42)).